Consider the following 655-residue polypeptide: Kelch-like protein 13 (655 aa).

Positions 92–161 (CDVTLMPGDT…IYTAKLSLNM (70 aa)) constitute a BTB domain. The region spanning 196–297 (CVEVGRIANT…TPQELINYVQ (102 aa)) is the BACK domain. Kelch repeat units follow at residues 341 to 389 (HLVT…VIGN), 390 to 441 (FLYV…ALKG), 442 to 488 (YLYA…VYGG), 490 to 535 (MYIS…TVGE), 537 to 587 (LYVI…VFEN), and 588 to 636 (KIYV…TLTV).

Component of the BCR(KLHL9-KLHL13) E3 ubiquitin ligase complex, at least composed of CUL3, KLHL9, KLHL13 and RBX1. Interacts with AURKB.

Its pathway is protein modification; protein ubiquitination. Functionally, substrate-specific adapter of a BCR (BTB-CUL3-RBX1) E3 ubiquitin-protein ligase complex required for mitotic progression and cytokinesis. The BCR(KLHL9-KLHL13) E3 ubiquitin ligase complex mediates the ubiquitination of AURKB and controls the dynamic behavior of AURKB on mitotic chromosomes and thereby coordinates faithful mitotic progression and completion of cytokinesis. This is Kelch-like protein 13 (KLHL13) from Homo sapiens (Human).